Consider the following 418-residue polypeptide: 3-phosphoshikimate 1-carboxyvinyltransferase (418 aa).

3-phosphoshikimate contacts are provided by Lys26, Ser27, and Arg31. Lys26 lines the phosphoenolpyruvate pocket. Residues Gly97 and Arg125 each coordinate phosphoenolpyruvate. 6 residues coordinate 3-phosphoshikimate: Ser170, Ser171, Gln172, Asp297, Asn320, and Lys324. Residue Gln172 coordinates phosphoenolpyruvate. Asp297 functions as the Proton acceptor in the catalytic mechanism. Phosphoenolpyruvate contacts are provided by Arg328, Arg375, and Lys400.

This sequence belongs to the EPSP synthase family. Monomer.

The protein resides in the cytoplasm. The enzyme catalyses 3-phosphoshikimate + phosphoenolpyruvate = 5-O-(1-carboxyvinyl)-3-phosphoshikimate + phosphate. Its pathway is metabolic intermediate biosynthesis; chorismate biosynthesis; chorismate from D-erythrose 4-phosphate and phosphoenolpyruvate: step 6/7. Catalyzes the transfer of the enolpyruvyl moiety of phosphoenolpyruvate (PEP) to the 5-hydroxyl of shikimate-3-phosphate (S3P) to produce enolpyruvyl shikimate-3-phosphate and inorganic phosphate. The polypeptide is 3-phosphoshikimate 1-carboxyvinyltransferase (Pseudomonas savastanoi pv. phaseolicola (strain 1448A / Race 6) (Pseudomonas syringae pv. phaseolicola (strain 1448A / Race 6))).